The chain runs to 178 residues: Acireductone dioxygenase (178 aa).

Positions 81, 83, 87, and 126 each coordinate Fe(2+). 4 residues coordinate Ni(2+): histidine 81, histidine 83, glutamate 87, and histidine 126.

This sequence belongs to the acireductone dioxygenase (ARD) family. Fe(2+) is required as a cofactor. Ni(2+) serves as cofactor.

It is found in the cytoplasm. Its subcellular location is the nucleus. It carries out the reaction 1,2-dihydroxy-5-(methylsulfanyl)pent-1-en-3-one + O2 = 4-methylsulfanyl-2-oxobutanoate + formate + 2 H(+). The enzyme catalyses 1,2-dihydroxy-5-(methylsulfanyl)pent-1-en-3-one + O2 = 3-(methylsulfanyl)propanoate + CO + formate + 2 H(+). The protein operates within amino-acid biosynthesis; L-methionine biosynthesis via salvage pathway; L-methionine from S-methyl-5-thio-alpha-D-ribose 1-phosphate: step 5/6. In terms of biological role, catalyzes 2 different reactions between oxygen and the acireductone 1,2-dihydroxy-3-keto-5-methylthiopentene (DHK-MTPene) depending upon the metal bound in the active site. Fe-containing acireductone dioxygenase (Fe-ARD) produces formate and 2-keto-4-methylthiobutyrate (KMTB), the alpha-ketoacid precursor of methionine in the methionine recycle pathway. Ni-containing acireductone dioxygenase (Ni-ARD) produces methylthiopropionate, carbon monoxide and formate, and does not lie on the methionine recycle pathway. This Neurospora crassa (strain ATCC 24698 / 74-OR23-1A / CBS 708.71 / DSM 1257 / FGSC 987) protein is Acireductone dioxygenase (adi1).